Consider the following 275-residue polypeptide: Large ribosomal subunit protein uL2 (275 aa).

Basic and acidic residues predominate over residues 28-38 (RPYDGLLEKKS). Disordered regions lie at residues 28–58 (RPYD…GGGH) and 223–275 (VAMN…RKAK). Residues 254 to 275 (KGHKTRKNKRTDKLIVRRRKAK) show a composition bias toward basic residues.

The protein belongs to the universal ribosomal protein uL2 family. In terms of assembly, part of the 50S ribosomal subunit. Forms a bridge to the 30S subunit in the 70S ribosome.

In terms of biological role, one of the primary rRNA binding proteins. Required for association of the 30S and 50S subunits to form the 70S ribosome, for tRNA binding and peptide bond formation. It has been suggested to have peptidyltransferase activity; this is somewhat controversial. Makes several contacts with the 16S rRNA in the 70S ribosome. This is Large ribosomal subunit protein uL2 from Chromohalobacter salexigens (strain ATCC BAA-138 / DSM 3043 / CIP 106854 / NCIMB 13768 / 1H11).